A 101-amino-acid chain; its full sequence is Small ribosomal subunit protein uS14 (101 aa).

The protein belongs to the universal ribosomal protein uS14 family. As to quaternary structure, part of the 30S ribosomal subunit. Contacts proteins S3 and S10.

In terms of biological role, binds 16S rRNA, required for the assembly of 30S particles and may also be responsible for determining the conformation of the 16S rRNA at the A site. The protein is Small ribosomal subunit protein uS14 of Aromatoleum aromaticum (strain DSM 19018 / LMG 30748 / EbN1) (Azoarcus sp. (strain EbN1)).